Consider the following 356-residue polypeptide: Butyrate kinase (356 aa).

This sequence belongs to the acetokinase family.

It is found in the cytoplasm. It catalyses the reaction butanoate + ATP = butanoyl phosphate + ADP. It functions in the pathway lipid metabolism; butanoate metabolism. Functionally, catalyzes the conversion of butyryl-CoA through butyryl phosphate to butyrate. The polypeptide is Butyrate kinase (buk) (Clostridium perfringens (strain 13 / Type A)).